We begin with the raw amino-acid sequence, 60 residues long: Transcriptional regulatory protein SenN (60 aa).

A DNA-binding region (H-T-H motif) is located at residues arginine 11–lysine 31.

This sequence to B.subtilis SenS.

Functionally, regulates the expression of extracellular-protein genes of Bacillus natto. This is Transcriptional regulatory protein SenN (senN) from Bacillus subtilis subsp. natto.